A 139-amino-acid polypeptide reads, in one-letter code: Flagellar basal body rod protein FlgB (139 aa).

The protein belongs to the flagella basal body rod proteins family. The basal body constitutes a major portion of the flagellar organelle and consists of a number of rings mounted on a central rod. In Gram-negative bacteria, at least four rings, L, P, S and M are present, whereas Gram-positive bacteria lack the L and P rings. The rod consists of about 26 subunits of FlgG in the distal portion, and FlgB, FlgC and FlgF build up the proximal portion of the rod with about 6 subunits each. Rod assembly occurs by export via the flagellum-specific pathway of its constituent proteins and by their incorporation into the rod structure in the probable order of FlgB, FlgC, FlgF and FlgG. Another protein, FliE, also assembles onto the stable rod structure.

It localises to the bacterial flagellum basal body. In terms of biological role, structural component of flagellum, the bacterial motility apparatus. Part of the rod structure of flagellar basal body. This chain is Flagellar basal body rod protein FlgB, found in Proteus mirabilis.